Reading from the N-terminus, the 461-residue chain is Adenosylmethionine-8-amino-7-oxononanoate aminotransferase (461 aa).

G117–A118 serves as a coordination point for pyridoxal 5'-phosphate. Residue Y150 participates in substrate binding. D263 provides a ligand contact to pyridoxal 5'-phosphate. The substrate site is built by K296, G331, and R426. Residue K296 is modified to N6-(pyridoxal phosphate)lysine.

Belongs to the class-III pyridoxal-phosphate-dependent aminotransferase family. BioA subfamily. Homodimer. Pyridoxal 5'-phosphate is required as a cofactor.

The protein resides in the cytoplasm. It catalyses the reaction (8S)-8-amino-7-oxononanoate + S-adenosyl-L-methionine = S-adenosyl-4-methylsulfanyl-2-oxobutanoate + (7R,8S)-7,8-diammoniononanoate. It participates in cofactor biosynthesis; biotin biosynthesis; 7,8-diaminononanoate from 8-amino-7-oxononanoate (SAM route): step 1/1. In terms of biological role, catalyzes the transfer of the alpha-amino group from S-adenosyl-L-methionine (SAM) to 7-keto-8-aminopelargonic acid (KAPA) to form 7,8-diaminopelargonic acid (DAPA). It is the only aminotransferase known to utilize SAM as an amino donor. This Methanocaldococcus jannaschii (strain ATCC 43067 / DSM 2661 / JAL-1 / JCM 10045 / NBRC 100440) (Methanococcus jannaschii) protein is Adenosylmethionine-8-amino-7-oxononanoate aminotransferase.